Reading from the N-terminus, the 113-residue chain is Large ribosomal subunit protein eL31 (113 aa).

This sequence belongs to the eukaryotic ribosomal protein eL31 family.

This Candida glabrata (strain ATCC 2001 / BCRC 20586 / JCM 3761 / NBRC 0622 / NRRL Y-65 / CBS 138) (Yeast) protein is Large ribosomal subunit protein eL31 (RPL31).